Consider the following 205-residue polypeptide: ATP phosphoribosyltransferase (205 aa).

This sequence belongs to the ATP phosphoribosyltransferase family. Short subfamily. As to quaternary structure, heteromultimer composed of HisG and HisZ subunits.

The protein resides in the cytoplasm. It catalyses the reaction 1-(5-phospho-beta-D-ribosyl)-ATP + diphosphate = 5-phospho-alpha-D-ribose 1-diphosphate + ATP. The protein operates within amino-acid biosynthesis; L-histidine biosynthesis; L-histidine from 5-phospho-alpha-D-ribose 1-diphosphate: step 1/9. Functionally, catalyzes the condensation of ATP and 5-phosphoribose 1-diphosphate to form N'-(5'-phosphoribosyl)-ATP (PR-ATP). Has a crucial role in the pathway because the rate of histidine biosynthesis seems to be controlled primarily by regulation of HisG enzymatic activity. The protein is ATP phosphoribosyltransferase of Helicobacter hepaticus (strain ATCC 51449 / 3B1).